Consider the following 85-residue polypeptide: MKGTFLICLILIAGFYFRSIQGFYFKRIQGNICSEPKKVGRCRGSFPRFYFDSETGKCTPFIYGGCGGNGNNFETLHACRAICRA.

The N-terminal stretch at 1 to 22 is a signal peptide; it reads MKGTFLICLILIAGFYFRSIQG. Positions 23–29 are excised as a propeptide; it reads FYFKRIQ. One can recognise a BPTI/Kunitz inhibitor domain in the interval 33–83; that stretch reads CSEPKKVGRCRGSFPRFYFDSETGKCTPFIYGGCGGNGNNFETLHACRAIC. 3 cysteine pairs are disulfide-bonded: C33-C83, C42-C66, and C58-C79.

Belongs to the venom Kunitz-type family. Sea anemone type 2 potassium channel toxin subfamily.

It is found in the secreted. The protein localises to the nematocyst. In terms of biological role, serine protease inhibitor that also shows protective effect in a cytotoxicity model. It binds to all proteases tested (trypsin (Ki=52 nM), alpha-chymotrypsin, cathepsin G, kallikrein, and human neutrophil elastase). It significantly increases neuroblastoma cell viability in an in vitro neurotoxicity model, being a consequence of an effective decrease of reactive oxygen species (ROS) level in the cells. It also seems to protect cells by inhibiting ATP-induced purinoceptor (P2RX7) activation. The polypeptide is PI-stichotoxin-Hcr2i (Radianthus crispa (Leathery sea anemone)).